A 1043-amino-acid polypeptide reads, in one-letter code: NACHT, LRR and PYD domains-containing protein 13 (1043 aa).

The region spanning 1–107 is the Pyrin domain; the sequence is MNFSVITCPN…CEKVRAEMKE (107 aa). Residues 229–558 form the NACHT domain; that stretch reads QTIVLVGRAG…VLEEPREFPP (330 aa). Position 235–242 (235–242) interacts with ATP; it reads GRAGVGKT. LRR repeat units lie at residues 725 to 749, 781 to 804, 837 to 864, 894 to 917, 923 to 946, 951 to 978, and 1007 to 1030; these read NENL…LCLA, NSKL…ILKA, IQHV…ALTH, NRSL…FLCE, DGNL…ELAN, NHNV…ALKP, and SKSL…MLCK.

The protein belongs to the NLRP family.

Its function is as follows. Involved in inflammation. This chain is NACHT, LRR and PYD domains-containing protein 13 (NLRP13), found in Homo sapiens (Human).